The chain runs to 404 residues: S-adenosylmethionine synthase (404 aa).

Residue 141 to 146 coordinates ATP; sequence GQGSVD.

It belongs to the AdoMet synthase 2 family. The cofactor is Mg(2+).

It carries out the reaction L-methionine + ATP + H2O = S-adenosyl-L-methionine + phosphate + diphosphate. It participates in amino-acid biosynthesis; S-adenosyl-L-methionine biosynthesis; S-adenosyl-L-methionine from L-methionine: step 1/1. Its function is as follows. Catalyzes the formation of S-adenosylmethionine from methionine and ATP. This chain is S-adenosylmethionine synthase, found in Methanococcus vannielii (strain ATCC 35089 / DSM 1224 / JCM 13029 / OCM 148 / SB).